The following is a 372-amino-acid chain: Alpha-parvin (372 aa).

Positions 1–31 (MATSPQKSPLVPKSPTPKSPPSRKKDDSFLG) are disordered. Alanine 2 is modified (N-acetylalanine). 3 positions are modified to phosphoserine: serine 8, serine 14, and serine 19. An interaction with ARHGAP31 region spans residues 21 to 25 (PSRKK). Serine 28 and serine 62 each carry phosphoserine. 2 consecutive Calponin-homology (CH) domains span residues 95–202 (QELM…QYFR) and 262–369 (NVVK…TKYR). Positions 223–372 (GILQSRQIQE…NLFTKYRNVE (150 aa)) are required for interaction with TESK1 and ILK.

This sequence belongs to the parvin family. Component of the heterotrimeric IPP (ILK-PINCH-PARVIN) complex composed of ILK, LIMS1/PINCH and PARVA; the complex binds to F-actin via the C-terminal tail of LIMS1 and the N-terminal region of PARVA, promoting F-actin filament bundling. Interacts with TGFB1I1. Interacts with ARHGAP31. Interacts with the actin cytoskeleton. Interacts (via C-terminus) with TESK1 (via C-terminus); the interaction inhibits TESK1 kinase activity. Interacts with PXN/PAXILLIN (via LD motif 4).

The protein localises to the cell junction. Its subcellular location is the focal adhesion. It localises to the cell membrane. The protein resides in the cytoplasm. It is found in the cytoskeleton. The protein localises to the myofibril. Its subcellular location is the sarcomere. It localises to the z line. Plays a role in sarcomere organization and in smooth muscle cell contraction. Required for normal development of the embryonic cardiovascular system, and for normal septation of the heart outflow tract. Plays a role in sprouting angiogenesis and is required for normal adhesion of vascular smooth muscle cells to endothelial cells during blood vessel development. Plays a role in the reorganization of the actin cytoskeleton, formation of lamellipodia and ciliogenesis. Plays a role in the establishment of cell polarity, cell adhesion, cell spreading, and directed cell migration. Within the IPP (ILK-PINCH-PARVIN) complex, binds to F-actin, promoting F-actin bundling, a process required to generate force for actin cytoskeleton reorganization and subsequent dynamic cell adhesion events such as cell spreading and migration. The chain is Alpha-parvin (Parva) from Mus musculus (Mouse).